The primary structure comprises 147 residues: UPF0306 protein YhbP (147 aa).

The protein belongs to the UPF0306 family.

In Escherichia coli O8 (strain IAI1), this protein is UPF0306 protein YhbP.